A 155-amino-acid chain; its full sequence is Superoxide dismutase [Cu-Zn] (155 aa).

Residues H47, H49, and H64 each contribute to the Cu cation site. Residues C58 and C147 are joined by a disulfide bond. Residues H64, H72, H81, and D84 each contribute to the Zn(2+) site. H121 serves as a coordination point for Cu cation. Residue R144 participates in substrate binding.

This sequence belongs to the Cu-Zn superoxide dismutase family. As to quaternary structure, homodimer. Requires Cu cation as cofactor. Zn(2+) serves as cofactor.

The protein localises to the cytoplasm. It catalyses the reaction 2 superoxide + 2 H(+) = H2O2 + O2. Functionally, destroys radicals which are normally produced within the cells and which are toxic to biological systems. The chain is Superoxide dismutase [Cu-Zn] (SOD1) from Kluyveromyces lactis (strain ATCC 8585 / CBS 2359 / DSM 70799 / NBRC 1267 / NRRL Y-1140 / WM37) (Yeast).